Reading from the N-terminus, the 95-residue chain is Co-chaperonin GroES (95 aa).

Belongs to the GroES chaperonin family. As to quaternary structure, heptamer of 7 subunits arranged in a ring. Interacts with the chaperonin GroEL.

Its subcellular location is the cytoplasm. In terms of biological role, together with the chaperonin GroEL, plays an essential role in assisting protein folding. The GroEL-GroES system forms a nano-cage that allows encapsulation of the non-native substrate proteins and provides a physical environment optimized to promote and accelerate protein folding. GroES binds to the apical surface of the GroEL ring, thereby capping the opening of the GroEL channel. The sequence is that of Co-chaperonin GroES from Beijerinckia indica subsp. indica (strain ATCC 9039 / DSM 1715 / NCIMB 8712).